Consider the following 330-residue polypeptide: Putative protein N-methyltransferase FAM86B2 (330 aa).

M1 bears the N-acetylmethionine mark. S-adenosyl-L-methionine contacts are provided by residues W139, G165–G167, W228, and A247.

The protein belongs to the class I-like SAM-binding methyltransferase superfamily. EEF2KMT family. In terms of assembly, interacts with EEF2KMT.

This is Putative protein N-methyltransferase FAM86B2 (FAM86B2) from Homo sapiens (Human).